We begin with the raw amino-acid sequence, 87 residues long: Cell division topological specificity factor (87 aa).

It belongs to the MinE family.

In terms of biological role, prevents the cell division inhibition by proteins MinC and MinD at internal division sites while permitting inhibition at polar sites. This ensures cell division at the proper site by restricting the formation of a division septum at the midpoint of the long axis of the cell. In Chelativorans sp. (strain BNC1), this protein is Cell division topological specificity factor.